Consider the following 116-residue polypeptide: Large ribosomal subunit protein uL24 (116 aa).

This sequence belongs to the universal ribosomal protein uL24 family. As to quaternary structure, part of the 50S ribosomal subunit.

Functionally, one of two assembly initiator proteins, it binds directly to the 5'-end of the 23S rRNA, where it nucleates assembly of the 50S subunit. In terms of biological role, located at the polypeptide exit tunnel on the outside of the subunit. The protein is Large ribosomal subunit protein uL24 of Methanosarcina barkeri (strain Fusaro / DSM 804).